A 245-amino-acid chain; its full sequence is Biosynthetic peptidoglycan transglycosylase (245 aa).

The helical transmembrane segment at 20-42 threads the bilayer; it reads VYAGSVFAGAWLATQLFYLAQIA.

It belongs to the glycosyltransferase 51 family.

The protein localises to the cell inner membrane. The catalysed reaction is [GlcNAc-(1-&gt;4)-Mur2Ac(oyl-L-Ala-gamma-D-Glu-L-Lys-D-Ala-D-Ala)](n)-di-trans,octa-cis-undecaprenyl diphosphate + beta-D-GlcNAc-(1-&gt;4)-Mur2Ac(oyl-L-Ala-gamma-D-Glu-L-Lys-D-Ala-D-Ala)-di-trans,octa-cis-undecaprenyl diphosphate = [GlcNAc-(1-&gt;4)-Mur2Ac(oyl-L-Ala-gamma-D-Glu-L-Lys-D-Ala-D-Ala)](n+1)-di-trans,octa-cis-undecaprenyl diphosphate + di-trans,octa-cis-undecaprenyl diphosphate + H(+). Its pathway is cell wall biogenesis; peptidoglycan biosynthesis. Functionally, peptidoglycan polymerase that catalyzes glycan chain elongation from lipid-linked precursors. The polypeptide is Biosynthetic peptidoglycan transglycosylase (Burkholderia cenocepacia (strain HI2424)).